A 469-amino-acid chain; its full sequence is ATP-dependent protease ATPase subunit HslU (469 aa).

ATP is bound by residues Ile24, Gly66–Glu71, Asp282, Glu347, and Arg419.

This sequence belongs to the ClpX chaperone family. HslU subfamily. As to quaternary structure, a double ring-shaped homohexamer of HslV is capped on each side by a ring-shaped HslU homohexamer. The assembly of the HslU/HslV complex is dependent on binding of ATP.

The protein localises to the cytoplasm. In terms of biological role, ATPase subunit of a proteasome-like degradation complex; this subunit has chaperone activity. The binding of ATP and its subsequent hydrolysis by HslU are essential for unfolding of protein substrates subsequently hydrolyzed by HslV. HslU recognizes the N-terminal part of its protein substrates and unfolds these before they are guided to HslV for hydrolysis. This Listeria monocytogenes serotype 4a (strain HCC23) protein is ATP-dependent protease ATPase subunit HslU.